The sequence spans 446 residues: Sulfoquinovose isomerase (446 aa).

This sequence belongs to the SqvD family.

It catalyses the reaction 6-sulfo-beta-D-quinovose = 6-deoxy-6-sulfo-D-fructose. Part of the sulfo-TAL (or sulfo-SFT) pathway, a D-sulfoquinovose degradation pathway that produces sulfolactate (SL). Catalyzes the isomerization of sulfoquinovose (SQ) to 6-deoxy-6-sulfo-D-fructose (SF). The polypeptide is Sulfoquinovose isomerase (Priestia aryabhattai (Bacillus aryabhattai)).